Consider the following 129-residue polypeptide: Small ribosomal subunit protein uS11 (129 aa).

This sequence belongs to the universal ribosomal protein uS11 family. In terms of assembly, part of the 30S ribosomal subunit. Interacts with proteins S7 and S18. Binds to IF-3.

Functionally, located on the platform of the 30S subunit, it bridges several disparate RNA helices of the 16S rRNA. Forms part of the Shine-Dalgarno cleft in the 70S ribosome. This chain is Small ribosomal subunit protein uS11, found in Paracoccus denitrificans (strain Pd 1222).